The chain runs to 283 residues: Zinc finger protein 691 (283 aa).

Residues 1–41 (MGSEKEQRPEAHLPEEGEGAKPWRVDGSKDSQITPREDHGQ) show a composition bias toward basic and acidic residues. The disordered stretch occupies residues 1–68 (MGSEKEQRPE…KVTAQAGGPG (68 aa)). A Phosphoserine modification is found at Ser43. Lys81 is covalently cross-linked (Glycyl lysine isopeptide (Lys-Gly) (interchain with G-Cter in SUMO2)). C2H2-type zinc fingers lie at residues 83–105 (FICAQCGKTFNNTSNLRTHQRIH), 111–133 (YKCSECGKSFSRSSNRIRHERIH), 139–161 (YQCAKCQESFRRRSDLTTHQQDH), 167–189 (YRCDICGKSFTQSSTLAVHHRTH), 195–217 (YICCECGKSFSNSSSFGVHHRTH), 223–245 (YECTECGRTFSDISNFGAHQRTH), and 251–273 (YRCTLCGKHFSRSSNLIRHQKTH).

It belongs to the krueppel C2H2-type zinc-finger protein family.

It is found in the nucleus. Its function is as follows. May be involved in transcriptional regulation. This Mus musculus (Mouse) protein is Zinc finger protein 691 (Znf691).